The following is a 630-amino-acid chain: 1-deoxy-D-xylulose-5-phosphate synthase (630 aa).

Thiamine diphosphate is bound by residues histidine 74 and 115–117 (GHA). Aspartate 146 serves as a coordination point for Mg(2+). Thiamine diphosphate-binding positions include 147–148 (AA), asparagine 175, phenylalanine 284, and glutamate 364. Asparagine 175 lines the Mg(2+) pocket.

It belongs to the transketolase family. DXPS subfamily. In terms of assembly, homodimer. The cofactor is Mg(2+). It depends on thiamine diphosphate as a cofactor.

The catalysed reaction is D-glyceraldehyde 3-phosphate + pyruvate + H(+) = 1-deoxy-D-xylulose 5-phosphate + CO2. The protein operates within metabolic intermediate biosynthesis; 1-deoxy-D-xylulose 5-phosphate biosynthesis; 1-deoxy-D-xylulose 5-phosphate from D-glyceraldehyde 3-phosphate and pyruvate: step 1/1. In terms of biological role, catalyzes the acyloin condensation reaction between C atoms 2 and 3 of pyruvate and glyceraldehyde 3-phosphate to yield 1-deoxy-D-xylulose-5-phosphate (DXP). In Methylacidiphilum infernorum (isolate V4) (Methylokorus infernorum (strain V4)), this protein is 1-deoxy-D-xylulose-5-phosphate synthase.